The chain runs to 241 residues: Uridylate kinase (241 aa).

Lys12–Gly15 lines the ATP pocket. UMP is bound at residue Gly54. ATP is bound by residues Gly55 and Arg59. Residues Asp74 and Thr135–Thr142 each bind UMP. Positions 162, 168, and 171 each coordinate ATP.

It belongs to the UMP kinase family. In terms of assembly, homohexamer.

Its subcellular location is the cytoplasm. The enzyme catalyses UMP + ATP = UDP + ADP. Its pathway is pyrimidine metabolism; CTP biosynthesis via de novo pathway; UDP from UMP (UMPK route): step 1/1. Its activity is regulated as follows. Inhibited by UTP. Catalyzes the reversible phosphorylation of UMP to UDP. The protein is Uridylate kinase of Magnetococcus marinus (strain ATCC BAA-1437 / JCM 17883 / MC-1).